Here is a 142-residue protein sequence, read N- to C-terminus: PDZ domain-containing protein 11 (142 aa).

The PDZ domain maps to 49–131 (TIVLKKPPGA…ILMKVRYFPY (83 aa)).

It is found in the cytoplasm. The chain is PDZ domain-containing protein 11 (pdzd11) from Danio rerio (Zebrafish).